Consider the following 448-residue polypeptide: Nicotinate phosphoribosyltransferase pncB1 (448 aa).

The interval Met1–Gly21 is disordered. His212 carries the phosphohistidine modification. The tract at residues Arg353–Ala372 is disordered.

The protein belongs to the NAPRTase family. Transiently phosphorylated on a His residue during the reaction cycle. Phosphorylation strongly increases the affinity for substrates and increases the rate of nicotinate D-ribonucleotide production. Dephosphorylation regenerates the low-affinity form of the enzyme, leading to product release.

The enzyme catalyses nicotinate + 5-phospho-alpha-D-ribose 1-diphosphate + ATP + H2O = nicotinate beta-D-ribonucleotide + ADP + phosphate + diphosphate. Its pathway is cofactor biosynthesis; NAD(+) biosynthesis; nicotinate D-ribonucleotide from nicotinate: step 1/1. Involved in the Preiss-Handler pathway, which is a recycling route that permits the salvage of free nicotinamide (NM) and nicotinic acid (Na) involved in the NAD biosynthesis. Catalyzes the synthesis of beta-nicotinate D-ribonucleotide from nicotinate and 5-phospho-D-ribose 1-phosphate at the expense of ATP. It is not able to use nicotinamide. PncB1 contributes to basal NAD level. This Mycobacterium tuberculosis (strain CDC 1551 / Oshkosh) protein is Nicotinate phosphoribosyltransferase pncB1 (pncB1).